A 195-amino-acid chain; its full sequence is Imidazoleglycerol-phosphate dehydratase (195 aa).

This sequence belongs to the imidazoleglycerol-phosphate dehydratase family.

Its subcellular location is the cytoplasm. It catalyses the reaction D-erythro-1-(imidazol-4-yl)glycerol 3-phosphate = 3-(imidazol-4-yl)-2-oxopropyl phosphate + H2O. Its pathway is amino-acid biosynthesis; L-histidine biosynthesis; L-histidine from 5-phospho-alpha-D-ribose 1-diphosphate: step 6/9. This Dinoroseobacter shibae (strain DSM 16493 / NCIMB 14021 / DFL 12) protein is Imidazoleglycerol-phosphate dehydratase.